We begin with the raw amino-acid sequence, 165 residues long: 3-isopropylmalate dehydratase small subunit (165 aa).

This sequence belongs to the LeuD family. LeuD type 2 subfamily. Heterodimer of LeuC and LeuD.

It carries out the reaction (2R,3S)-3-isopropylmalate = (2S)-2-isopropylmalate. The protein operates within amino-acid biosynthesis; L-leucine biosynthesis; L-leucine from 3-methyl-2-oxobutanoate: step 2/4. Its function is as follows. Catalyzes the isomerization between 2-isopropylmalate and 3-isopropylmalate, via the formation of 2-isopropylmaleate. In Saccharolobus islandicus (strain Y.G.57.14 / Yellowstone #1) (Sulfolobus islandicus), this protein is 3-isopropylmalate dehydratase small subunit.